Reading from the N-terminus, the 212-residue chain is GTP-binding protein EngB (212 aa).

Residues 36-212 form the EngB-type G domain; that stretch reads TAPEVAFAGR…LRAAVYDAII (177 aa). GTP-binding positions include 44–51, 71–75, 91–94, 158–161, and 192–194; these read GRSNVGKS, GRTQE, DMPG, TKSD, and TSS. The Mg(2+) site is built by Ser51 and Thr73.

It belongs to the TRAFAC class TrmE-Era-EngA-EngB-Septin-like GTPase superfamily. EngB GTPase family. It depends on Mg(2+) as a cofactor.

Functionally, necessary for normal cell division and for the maintenance of normal septation. The protein is GTP-binding protein EngB of Zymomonas mobilis subsp. mobilis (strain ATCC 31821 / ZM4 / CP4).